The primary structure comprises 137 residues: Small ribosomal subunit protein bS16 (137 aa).

A compositionally biased stretch (basic and acidic residues) spans 104–118; the sequence is ADEKKKPVLKPKTEK. The tract at residues 104-137 is disordered; that stretch reads ADEKKKPVLKPKTEKAAPAPEAAAPEAESTEEQA. A compositionally biased stretch (low complexity) spans 119 to 130; the sequence is AAPAPEAAAPEA.

Belongs to the bacterial ribosomal protein bS16 family.

This Clavibacter michiganensis subsp. michiganensis (strain NCPPB 382) protein is Small ribosomal subunit protein bS16.